Consider the following 190-residue polypeptide: Potassium-transporting ATPase KdpC subunit (190 aa).

A helical transmembrane segment spans residues 11–31 (LIVLMSLITGVAYPLVVTGVA).

This sequence belongs to the KdpC family. The system is composed of three essential subunits: KdpA, KdpB and KdpC.

It localises to the cell inner membrane. Its function is as follows. Part of the high-affinity ATP-driven potassium transport (or Kdp) system, which catalyzes the hydrolysis of ATP coupled with the electrogenic transport of potassium into the cytoplasm. This subunit acts as a catalytic chaperone that increases the ATP-binding affinity of the ATP-hydrolyzing subunit KdpB by the formation of a transient KdpB/KdpC/ATP ternary complex. The sequence is that of Potassium-transporting ATPase KdpC subunit from Pseudomonas savastanoi pv. phaseolicola (strain 1448A / Race 6) (Pseudomonas syringae pv. phaseolicola (strain 1448A / Race 6)).